The following is a 238-amino-acid chain: MKISILTLFPEMFSIFNHSIIGRAQENNIVELELLNIRDNTLDKHKKVDDYPYGGGAGMVMAPQPIIDTIRKAKENNKGKVIFLGPRGKTFNQKMAMDLSKEENLIFLCGHYEGIDERVYKHIDMEVSLGDFILTGGEMAAIPVIDSILRLIPGVLGKEESFVDESFSEDLLEYPQYTRPYEFEGEHVPEILLSGHHENIRKWRRLQSLDLTRKRRPDLYKNVILTKEDKKLLGRKNK.

Residues Gly-110 and 129–134 each bind S-adenosyl-L-methionine; that span reads LGDFIL.

Belongs to the RNA methyltransferase TrmD family. In terms of assembly, homodimer.

The protein localises to the cytoplasm. It catalyses the reaction guanosine(37) in tRNA + S-adenosyl-L-methionine = N(1)-methylguanosine(37) in tRNA + S-adenosyl-L-homocysteine + H(+). Specifically methylates guanosine-37 in various tRNAs. In Clostridium botulinum (strain Eklund 17B / Type B), this protein is tRNA (guanine-N(1)-)-methyltransferase.